Consider the following 316-residue polypeptide: Beta-galactosidase small subunit (316 aa).

It belongs to the bacterial beta-galactosidase small subunit family. In terms of assembly, heterodimer of a large (LacL) and a small subunit (LacM).

The catalysed reaction is Hydrolysis of terminal non-reducing beta-D-galactose residues in beta-D-galactosides.. Its function is as follows. Component of a beta-galactosidase. The protein is Beta-galactosidase small subunit (lacM) of Lactobacillus acidophilus (strain ATCC 700396 / NCK56 / N2 / NCFM).